The chain runs to 304 residues: tRNA pseudouridine synthase B (304 aa).

Residue aspartate 38 is the Nucleophile of the active site.

Belongs to the pseudouridine synthase TruB family. Type 1 subfamily.

It catalyses the reaction uridine(55) in tRNA = pseudouridine(55) in tRNA. In terms of biological role, responsible for synthesis of pseudouridine from uracil-55 in the psi GC loop of transfer RNAs. The chain is tRNA pseudouridine synthase B from Geobacter sulfurreducens (strain ATCC 51573 / DSM 12127 / PCA).